A 202-amino-acid chain; its full sequence is LexA repressor (202 aa).

Residues 28–48 (RAEIAQRLGFRSPNAAEEHLK) constitute a DNA-binding region (H-T-H motif). Catalysis depends on for autocatalytic cleavage activity residues serine 119 and lysine 156.

This sequence belongs to the peptidase S24 family. In terms of assembly, homodimer.

It catalyses the reaction Hydrolysis of Ala-|-Gly bond in repressor LexA.. Its function is as follows. Represses a number of genes involved in the response to DNA damage (SOS response), including recA and lexA. Binds to the 16 bp palindromic sequence 5'-CTGTATATATATACAG-3'. In the presence of single-stranded DNA, RecA interacts with LexA causing an autocatalytic cleavage which disrupts the DNA-binding part of LexA, leading to derepression of the SOS regulon and eventually DNA repair. The sequence is that of LexA repressor from Klebsiella pneumoniae subsp. pneumoniae (strain ATCC 700721 / MGH 78578).